Reading from the N-terminus, the 147-residue chain is Globin (147 aa).

A Globin domain is found at 1–147; the sequence is GLSAEQKTAL…LLGVLIENHQ (147 aa). Residues histidine 66 and histidine 98 each coordinate heme b.

This sequence belongs to the globin family. In terms of assembly, homodimer.

This is Globin from Tritia mutabilis (Sea snail).